Here is a 271-residue protein sequence, read N- to C-terminus: Ferric enterobactin transport ATP-binding protein FepC (271 aa).

An ABC transporter domain is found at 8-244 (LRGEQLTLGY…ELIERIYGLR (237 aa)). 40 to 47 (GPNGCGKS) contacts ATP.

It belongs to the ABC transporter superfamily. As to quaternary structure, the complex is composed of two ATP-binding proteins (FepC), two transmembrane proteins (FepD and FepG) and a solute-binding protein (FepB).

It localises to the cell inner membrane. The enzyme catalyses Fe(III)-enterobactin(out) + ATP + H2O = Fe(III)-enterobactin(in) + ADP + phosphate + H(+). Functionally, part of the ABC transporter complex FepBDGC involved in ferric enterobactin uptake. Responsible for energy coupling to the transport system. The sequence is that of Ferric enterobactin transport ATP-binding protein FepC (fepC) from Escherichia coli (strain K12).